We begin with the raw amino-acid sequence, 383 residues long: Serine protease 23 (383 aa).

Residues 1–23 form the signal peptide; it reads MAGIPGLLILLLVLLCVFMQVSP. Asparagine 93 carries an N-linked (GlcNAc...) asparagine glycan. The cysteines at positions 160 and 176 are disulfide-linked. Histidine 175 (charge relay system) is an active-site residue. Asparagine 207 is a glycosylation site (N-linked (GlcNAc...) asparagine). Active-site charge relay system residues include aspartate 240 and serine 316.

The protein belongs to the peptidase S1 family.

The protein localises to the secreted. In Rattus norvegicus (Rat), this protein is Serine protease 23 (Prss23).